The sequence spans 523 residues: Membrane protein PTM1 (523 aa).

An N-terminal signal peptide occupies residues 1–26 (MRVYQFCRPFQLFTYFLCYLLVFVKA). Over 27-197 (NKEKISQKNY…LAGTEINKLP (171 aa)) the chain is Lumenal. An N-linked (GlcNAc...) asparagine glycan is attached at Asn132. Residues 198–218 (LYGLLAVAYVVAMALYSFAFW) traverse the membrane as a helical segment. At 219 to 230 (KHKHELLPLQKY) the chain is on the cytoplasmic side. The chain crosses the membrane as a helical span at residues 231-251 (LLAFFVFLTAETIFVWAYYDL). Topologically, residues 252-265 (KNEKGDTAGIKVYM) are lumenal. The helical transmembrane segment at 266–286 (VFLSILTAGKVTFSFFLLLII) threads the bilayer. Residues 287-304 (ALGYGIVYPKLNKTLMRR) lie on the Cytoplasmic side of the membrane. Residues 305–325 (CQMYGALTYAICIGFLIQSYL) traverse the membrane as a helical segment. Residues 326 to 333 (TDMEAPSP) lie on the Lumenal side of the membrane. Residues 334-354 (LILITLIPMALALIIFYYMII) form a helical membrane-spanning segment. Residues 355 to 381 (RSMTKTVIYLKEQRQIVKLNMYKKLLY) are Cytoplasmic-facing. Residues 382–402 (IIYASFLSVLAGSIVSSFIYV) form a helical membrane-spanning segment. At 403 to 417 (GMNTIDMIEKNWRSR) the chain is on the lumenal side. Residues 418 to 438 (FFVTDFWPTLVYFIVFVTIAF) form a helical membrane-spanning segment. Topologically, residues 439–523 (LWRPTDTSYM…HGPVSPSPTK (85 aa)) are cytoplasmic. Ser480 is modified (phosphoserine). A phosphothreonine mark is found at Thr483 and Thr498. Residues 483–523 (TGERGIDEDDLNLNFTDDEEGHDNVNNHSQGHGPVSPSPTK) are disordered. Positions 488–503 (IDEDDLNLNFTDDEEG) are enriched in acidic residues.

The protein belongs to the LU7TM family.

It localises to the golgi apparatus membrane. It is found in the early endosome membrane. The polypeptide is Membrane protein PTM1 (PTM1) (Saccharomyces cerevisiae (strain YJM789) (Baker's yeast)).